We begin with the raw amino-acid sequence, 234 residues long: Phosphoribosylaminoimidazole-succinocarboxamide synthase (234 aa).

This sequence belongs to the SAICAR synthetase family.

It catalyses the reaction 5-amino-1-(5-phospho-D-ribosyl)imidazole-4-carboxylate + L-aspartate + ATP = (2S)-2-[5-amino-1-(5-phospho-beta-D-ribosyl)imidazole-4-carboxamido]succinate + ADP + phosphate + 2 H(+). It functions in the pathway purine metabolism; IMP biosynthesis via de novo pathway; 5-amino-1-(5-phospho-D-ribosyl)imidazole-4-carboxamide from 5-amino-1-(5-phospho-D-ribosyl)imidazole-4-carboxylate: step 1/2. In Clostridium botulinum (strain Langeland / NCTC 10281 / Type F), this protein is Phosphoribosylaminoimidazole-succinocarboxamide synthase.